Consider the following 306-residue polypeptide: Bifunctional protein FolD 2 (306 aa).

NADP(+) contacts are provided by residues 169 to 171 and Ile235; that span reads GHS.

The protein belongs to the tetrahydrofolate dehydrogenase/cyclohydrolase family. As to quaternary structure, homodimer.

It carries out the reaction (6R)-5,10-methylene-5,6,7,8-tetrahydrofolate + NADP(+) = (6R)-5,10-methenyltetrahydrofolate + NADPH. The catalysed reaction is (6R)-5,10-methenyltetrahydrofolate + H2O = (6R)-10-formyltetrahydrofolate + H(+). It functions in the pathway one-carbon metabolism; tetrahydrofolate interconversion. In terms of biological role, catalyzes the oxidation of 5,10-methylenetetrahydrofolate to 5,10-methenyltetrahydrofolate and then the hydrolysis of 5,10-methenyltetrahydrofolate to 10-formyltetrahydrofolate. The polypeptide is Bifunctional protein FolD 2 (Mesorhizobium japonicum (strain LMG 29417 / CECT 9101 / MAFF 303099) (Mesorhizobium loti (strain MAFF 303099))).